Reading from the N-terminus, the 28-residue chain is Dermaseptin-1 (28 aa).

Glutamine amide is present on Gln28.

As to expression, expressed by the skin glands.

The protein localises to the secreted. Functionally, has antimicrobial activity. The polypeptide is Dermaseptin-1 (Phyllomedusa tomopterna (Tiger-striped leaf frog)).